The chain runs to 67 residues: ATP synthase F(0) complex subunit 8 (67 aa).

A helical membrane pass occupies residues 8-24; the sequence is TWFINIVSMILTLFIVF. Lys54 is modified (N6-acetyllysine; alternate). Lys54 carries the post-translational modification N6-succinyllysine; alternate. Lys57 carries the post-translational modification N6-acetyllysine.

Belongs to the ATPase protein 8 family. In terms of assembly, component of the ATP synthase complex composed at least of ATP5F1A/subunit alpha, ATP5F1B/subunit beta, ATP5MC1/subunit c (homooctomer), MT-ATP6/subunit a, MT-ATP8/subunit 8, ATP5ME/subunit e, ATP5MF/subunit f, ATP5MG/subunit g, ATP5MK/subunit k, ATP5MJ/subunit j, ATP5F1C/subunit gamma, ATP5F1D/subunit delta, ATP5F1E/subunit epsilon, ATP5PF/subunit F6, ATP5PB/subunit b, ATP5PD/subunit d, ATP5PO/subunit OSCP. ATP synthase complex consists of a soluble F(1) head domain (subunits alpha(3) and beta(3)) - the catalytic core - and a membrane F(0) domain - the membrane proton channel (subunits c, a, 8, e, f, g, k and j). These two domains are linked by a central stalk (subunits gamma, delta, and epsilon) rotating inside the F1 region and a stationary peripheral stalk (subunits F6, b, d, and OSCP). Interacts with PRICKLE3.

Its subcellular location is the mitochondrion membrane. Its function is as follows. Subunit 8, of the mitochondrial membrane ATP synthase complex (F(1)F(0) ATP synthase or Complex V) that produces ATP from ADP in the presence of a proton gradient across the membrane which is generated by electron transport complexes of the respiratory chain. ATP synthase complex consist of a soluble F(1) head domain - the catalytic core - and a membrane F(1) domain - the membrane proton channel. These two domains are linked by a central stalk rotating inside the F(1) region and a stationary peripheral stalk. During catalysis, ATP synthesis in the catalytic domain of F(1) is coupled via a rotary mechanism of the central stalk subunits to proton translocation. In vivo, can only synthesize ATP although its ATP hydrolase activity can be activated artificially in vitro. Part of the complex F(0) domain. The sequence is that of ATP synthase F(0) complex subunit 8 from Equus asinus (Donkey).